The following is a 456-amino-acid chain: Ammonium transporter Amt2 (456 aa).

11 helical membrane passes run 18–38 (LVWVLTVTFLIFFMHAGFAML), 61–81 (IGVIVFFLLGAAVSAIVAGLT), 109–129 (WLFGAVFAMTAATIVSGAVAG), 141–161 (ILIAGVIYPVVVGVTWAGGFL), 170–190 (AGGMIVHGMGGIAGLTAAWII), 211–231 (ITFAVLGTLILAFGWYGFNVG), 255–275 (VALVTTLGMAAGALGAGGVAF), 281–301 (VDTLYVANGVLAGLVGITAIA), 304–324 (IVWPGALVVGLLAGAQLPIVF), 339–359 (VFPVHGSAGVLGTLLYPVFAV), and 377–397 (VGVGVIAVWTFVATTAIFGGF).

The protein belongs to the ammonia transporter channel (TC 1.A.11.2) family. Homotrimer. Interacts with both GlnK1 and GlnK2 after ammonium shock.

It localises to the cell membrane. Functionally, involved in the uptake of ammonium/ammonia (NH(4)(+)/NH(3)). Transport is electrogenic. In Haloferax mediterranei (strain ATCC 33500 / DSM 1411 / JCM 8866 / NBRC 14739 / NCIMB 2177 / R-4) (Halobacterium mediterranei), this protein is Ammonium transporter Amt2.